The primary structure comprises 203 residues: Octanoyltransferase (203 aa).

The BPL/LPL catalytic domain occupies 32–203 (ISTPDEIWLV…LMHKIREIFS (172 aa)). Residues 71-78 (RGGKITYH), 138-140 (SLG), and 151-153 (GMA) contribute to the substrate site. Residue Cys169 is the Acyl-thioester intermediate of the active site.

Belongs to the LipB family.

It is found in the cytoplasm. It catalyses the reaction octanoyl-[ACP] + L-lysyl-[protein] = N(6)-octanoyl-L-lysyl-[protein] + holo-[ACP] + H(+). It participates in protein modification; protein lipoylation via endogenous pathway; protein N(6)-(lipoyl)lysine from octanoyl-[acyl-carrier-protein]: step 1/2. Catalyzes the transfer of endogenously produced octanoic acid from octanoyl-acyl-carrier-protein onto the lipoyl domains of lipoate-dependent enzymes. Lipoyl-ACP can also act as a substrate although octanoyl-ACP is likely to be the physiological substrate. The chain is Octanoyltransferase from Buchnera aphidicola subsp. Baizongia pistaciae (strain Bp).